The chain runs to 238 residues: tRNA (guanine-N(7)-)-methyltransferase (238 aa).

Glu68, Glu93, Asp120, and Asp143 together coordinate S-adenosyl-L-methionine. Residue Asp143 is part of the active site. Substrate contacts are provided by residues Lys147, Asp179, and 216-219 (TKFE).

Belongs to the class I-like SAM-binding methyltransferase superfamily. TrmB family.

The enzyme catalyses guanosine(46) in tRNA + S-adenosyl-L-methionine = N(7)-methylguanosine(46) in tRNA + S-adenosyl-L-homocysteine. It participates in tRNA modification; N(7)-methylguanine-tRNA biosynthesis. Catalyzes the formation of N(7)-methylguanine at position 46 (m7G46) in tRNA. This Aliivibrio salmonicida (strain LFI1238) (Vibrio salmonicida (strain LFI1238)) protein is tRNA (guanine-N(7)-)-methyltransferase.